The primary structure comprises 517 residues: Aldehyde dehydrogenase, mitochondrial (517 aa).

The N-terminal 17 residues, 1-17, are a transit peptide targeting the mitochondrion; the sequence is MLRAAARFGPRLGRRLL. An SIFI-degron motif is present at residues 9–24; that stretch reads GPRLGRRLLSAAATQA. 4 positions are modified to N6-acetyllysine: K52, K73, K78, and K159. 262 to 267 contributes to the NAD(+) binding site; it reads GSTEIG. The Proton acceptor role is filled by E285. C319 serves as the catalytic Nucleophile. Residues K368, K383, K426, K428, and K451 each carry the N6-acetyllysine modification.

Belongs to the aldehyde dehydrogenase family. As to quaternary structure, homotetramer. In response to mitochondrial stress, the precursor protein is ubiquitinated by the SIFI complex in the cytoplasm before mitochondrial import, leading to its degradation. Within the SIFI complex, UBR4 initiates ubiquitin chain that are further elongated or branched by KCMF1.

It is found in the mitochondrion matrix. The catalysed reaction is an aldehyde + NAD(+) + H2O = a carboxylate + NADH + 2 H(+). Its pathway is alcohol metabolism; ethanol degradation; acetate from ethanol: step 2/2. Required for clearance of cellular formaldehyde, a cytotoxic and carcinogenic metabolite that induces DNA damage. This Homo sapiens (Human) protein is Aldehyde dehydrogenase, mitochondrial (ALDH2).